Reading from the N-terminus, the 753-residue chain is 5-methyltetrahydropteroyltriglutamate--homocysteine methyltransferase (753 aa).

5-methyltetrahydropteroyltri-L-glutamate contacts are provided by residues 17-20 and K117; that span reads RELK. L-homocysteine contacts are provided by residues 431-433 and E484; that span reads IGS. Residues 431 to 433 and E484 each bind L-methionine; that span reads IGS. Residues 515-516 and W561 each bind 5-methyltetrahydropteroyltri-L-glutamate; that span reads RC. D599 is a binding site for L-homocysteine. Residue D599 coordinates L-methionine. 5-methyltetrahydropteroyltri-L-glutamate is bound at residue E605. Zn(2+)-binding residues include H641, C643, and E665. The Proton donor role is filled by H694. C726 contacts Zn(2+).

It belongs to the vitamin-B12 independent methionine synthase family. Requires Zn(2+) as cofactor.

The enzyme catalyses 5-methyltetrahydropteroyltri-L-glutamate + L-homocysteine = tetrahydropteroyltri-L-glutamate + L-methionine. It functions in the pathway amino-acid biosynthesis; L-methionine biosynthesis via de novo pathway; L-methionine from L-homocysteine (MetE route): step 1/1. Catalyzes the transfer of a methyl group from 5-methyltetrahydrofolate to homocysteine resulting in methionine formation. The chain is 5-methyltetrahydropteroyltriglutamate--homocysteine methyltransferase from Escherichia coli O6:K15:H31 (strain 536 / UPEC).